We begin with the raw amino-acid sequence, 224 residues long: ATP phosphoribosyltransferase (224 aa).

Belongs to the ATP phosphoribosyltransferase family. Short subfamily. As to quaternary structure, heteromultimer composed of HisG and HisZ subunits.

Its subcellular location is the cytoplasm. The catalysed reaction is 1-(5-phospho-beta-D-ribosyl)-ATP + diphosphate = 5-phospho-alpha-D-ribose 1-diphosphate + ATP. The protein operates within amino-acid biosynthesis; L-histidine biosynthesis; L-histidine from 5-phospho-alpha-D-ribose 1-diphosphate: step 1/9. Catalyzes the condensation of ATP and 5-phosphoribose 1-diphosphate to form N'-(5'-phosphoribosyl)-ATP (PR-ATP). Has a crucial role in the pathway because the rate of histidine biosynthesis seems to be controlled primarily by regulation of HisG enzymatic activity. The protein is ATP phosphoribosyltransferase of Cupriavidus metallidurans (strain ATCC 43123 / DSM 2839 / NBRC 102507 / CH34) (Ralstonia metallidurans).